The following is a 324-amino-acid chain: Transcription factor MYB74 (324 aa).

2 consecutive HTH myb-type domains span residues lysine 10–leucine 62 and arginine 63–leucine 117. DNA-binding regions (H-T-H motif) lie at residues tryptophan 38 to leucine 62 and tryptophan 90 to isoleucine 113.

In terms of tissue distribution, highly expressed in flowers and at lower levels in rosette leaves and cauline leaves. Expressed at low levels in roots, stems and siliques.

Its subcellular location is the nucleus. Probable transcription factor that may function in salt stress response. The polypeptide is Transcription factor MYB74 (Arabidopsis thaliana (Mouse-ear cress)).